The following is a 1842-amino-acid chain: Fatty acid synthase alpha subunit pigJ (1842 aa).

Positions G120–D184 are disordered. Residues S140–T175 are compositionally biased toward low complexity. Residues D184 to K262 enclose the Carrier domain. At S222 the chain carries O-(pantetheine 4'-phosphoryl)serine. A beta-ketoacyl reductase region spans residues G611–G807. Residues K1058–A1585 form the Ketosynthase family 3 (KS3) domain. Active-site for beta-ketoacyl synthase activity residues include C1244, H1470, and H1511. The disordered stretch occupies residues K1649–T1672. Low complexity predominate over residues N1658–S1668. Positions 1725, 1726, and 1727 each coordinate Mg(2+). Acetyl-CoA is bound by residues D1725 to E1727, S1761, E1770 to S1780, and I1823 to H1825. T1824 and H1825 together coordinate Mg(2+).

It belongs to the thiolase-like superfamily. Fungal fatty acid synthetase subunit alpha family. [Alpha(6)beta(6)] hexamers of two multifunctional subunits (alpha and beta).

It catalyses the reaction acetyl-CoA + n malonyl-CoA + 2n NADPH + 4n H(+) = a long-chain-acyl-CoA + n CoA + n CO2 + 2n NADP(+).. The enzyme catalyses a fatty acyl-[ACP] + malonyl-[ACP] + H(+) = a 3-oxoacyl-[ACP] + holo-[ACP] + CO2. The catalysed reaction is a (3R)-hydroxyacyl-[ACP] + NADP(+) = a 3-oxoacyl-[ACP] + NADPH + H(+). It participates in secondary metabolite biosynthesis. Fatty acid synthase alpha subunit; part of the gene cluster that mediates the biosynthesis of azaphilone pigments (MonAzPs), a complex mixture of compounds with a common azaphilone skeleton very widely used as food colorants. PigJ and pigK form the two subunits of a dedicated fungal fatty acid synthase (FAS) that produces the side chain fatty acyl moiety of MonAzPs, a beta-keto fatty acid. The chain length control of the pigJ-pigK FAS is somewhat flexible as MonAzPs features either a beta-ketooctanoic or a beta-ketodecanoic acid moiety. The beta-ketoacyl-ACP probably serves as the substrate for the acetyltransferase pigD that directly transfers the fatty acyl chain to the C-4 alcohol of the pyran ring. The first step of the pathway is performed by the nrPKS pigA that forms the hexaketide precursor from successive condensations of five malonyl-CoA units, with a simple acetyl-CoA starter unit. The role of esterase pigG is not clear, but it may play at most a supplementary role in the formation of the benzaldehyde produced by the pigA nrPKS. This very reactive benzaldehyde is intercepted by the pigC ketoreductase that to provide the first stable enzyme-free MonAzPs intermediate, 6-(4-hydroxy-2-oxopentyl)-3-methyl-2,4-dioxocyclohexane carbaldehyde, also known as M7PKS-1. The FAD-dependent monooxygenase pigN hydroxylates M7PKS-1 at C-4, which triggers the formation of the pyran ring. PigJ, pigK and pigD are involved in the acetylation of the pyran ring. PigJ and pigK form the two subunits of a dedicated fungal FAS that produces the side chain fatty acyl moiety of MonAzPs and pigD transfers the fatty acyl chain to the C-4 alcohol. PigM and pigO are involved in the elimination of the omega-1 alcohol. PigM acts as an O-acetyltransferase that synthesizes the putative O-11 acetyl intermediate whereas pigO eliminates acetic acid to yield an intermediate with a C10(11) double bond. The dehydration of the C-11 alcohol followed by the reduction of the C6(7) double bond by the NAD(P)H-dependent oxidoreductase pigE increases the electrophilicity of the C-5 ketone of the resulting acyl benzopyran. This in turn sets up the C-5 ketone for an intramolecular Knoevenagel aldol condensation with the C-20 enol of the side chain. This condensation affords the characteristic linear tricyclic carbon skeletons of the yellow pigments that serve as the common precursors for the classical yellow pigments monascin and ankaflavin, orange pigments rubopunctatin and monascorubrin, and red pigments ribropunctamine and monascorubramine. The FAD-dependent oxidoreductase pigF is especially invoved in the biosynthesis of orange and red pigments via desaturation of C6(7). In Monascus ruber (Mold), this protein is Fatty acid synthase alpha subunit pigJ.